Consider the following 418-residue polypeptide: Serine hydroxymethyltransferase (418 aa).

(6S)-5,6,7,8-tetrahydrofolate contacts are provided by residues L121 and 125–127; that span reads GHL. Residue K230 is modified to N6-(pyridoxal phosphate)lysine. 356 to 358 is a binding site for (6S)-5,6,7,8-tetrahydrofolate; it reads SPF.

The protein belongs to the SHMT family. In terms of assembly, homodimer. Pyridoxal 5'-phosphate serves as cofactor.

The protein resides in the cytoplasm. The enzyme catalyses (6R)-5,10-methylene-5,6,7,8-tetrahydrofolate + glycine + H2O = (6S)-5,6,7,8-tetrahydrofolate + L-serine. Its pathway is one-carbon metabolism; tetrahydrofolate interconversion. It functions in the pathway amino-acid biosynthesis; glycine biosynthesis; glycine from L-serine: step 1/1. Its function is as follows. Catalyzes the reversible interconversion of serine and glycine with tetrahydrofolate (THF) serving as the one-carbon carrier. This reaction serves as the major source of one-carbon groups required for the biosynthesis of purines, thymidylate, methionine, and other important biomolecules. Also exhibits THF-independent aldolase activity toward beta-hydroxyamino acids, producing glycine and aldehydes, via a retro-aldol mechanism. The chain is Serine hydroxymethyltransferase from Shewanella piezotolerans (strain WP3 / JCM 13877).